We begin with the raw amino-acid sequence, 178 residues long: Large ribosomal subunit protein uL6 (178 aa).

It belongs to the universal ribosomal protein uL6 family. Part of the 50S ribosomal subunit.

Functionally, this protein binds to the 23S rRNA, and is important in its secondary structure. It is located near the subunit interface in the base of the L7/L12 stalk, and near the tRNA binding site of the peptidyltransferase center. In Nautilia profundicola (strain ATCC BAA-1463 / DSM 18972 / AmH), this protein is Large ribosomal subunit protein uL6.